The following is a 237-amino-acid chain: Immunoglobulin superfamily member 6 (237 aa).

The N-terminal stretch at 1 to 27 (MGPVSARRSRLRPEISLILFQVGMVGA) is a signal peptide. At 28-152 (CTVYVLQPGY…ERLFSKEVRS (125 aa)) the chain is on the extracellular side. Residues 30–134 (VYVLQPGYLE…ELSPSAKHVG (105 aa)) form the Ig-like C2-type domain. Cysteines 51 and 118 form a disulfide. Residues 153-173 (FLIVLLALLSVYITGVCVTFI) traverse the membrane as a helical segment. Over 174–237 (VLFKSKSNGP…RKALPNPGRA (64 aa)) the chain is Cytoplasmic. Basic and acidic residues predominate over residues 215–229 (TSHLPEQEGTDENRK). Positions 215–237 (TSHLPEQEGTDENRKALPNPGRA) are disordered.

In terms of tissue distribution, ubiquitous with higher expression in immune tissue.

It localises to the membrane. This is Immunoglobulin superfamily member 6 (Igsf6) from Mus musculus (Mouse).